Here is a 1050-residue protein sequence, read N- to C-terminus: Ankyrin repeat domain-containing protein 27 (1050 aa).

The sufficient for GEF activity towards RAB21 stretch occupies residues 1–372 (MALYDEDLLK…RQGSLSAKPP (372 aa)). The 139-residue stretch at 233–371 (ASEDAAFNKI…IRQGSLSAKP (139 aa)) folds into the VPS9 domain. 6 ANK repeats span residues 396-426 (SPTD…DKDT), 462-491 (RGHT…MVNA), 495-524 (HGAT…SAEV), 528-560 (NGNT…RLDI), 564-593 (KGDT…STEI), and 597-627 (LKET…RQKS). The segment at 396–460 (SPTDCLFKHI…PSVVTPFSRD (65 aa)) is sufficient for interaction with VPS29. Residues 451-600 (PSVVTPFSRD…TEIQNRLKET (150 aa)) are interaction with RAB38. The interaction with RAB32 stretch occupies residues 451-730 (PSVVTPFSRD…APAQKRLAKV (280 aa)). A disordered region spans residues 625–665 (QKSSEAPVQSPQRSVDSISQESSTSSFSSMSASSRQEETKK). A compositionally biased stretch (polar residues) spans 628–637 (SEAPVQSPQR). The span at 638 to 658 (SVDSISQESSTSSFSSMSASS) shows a compositional bias: low complexity. Residues 658 to 707 (SRQEETKKDYREVEKLLRAVADGDLEMVRYLLEWTEEDLEDAEDTVSAAD) form a required for interaction with VAMP7 region. ANK repeat units follow at residues 668–698 (REVE…DLED), 743–772 (DGSS…NAGA), 776–805 (DQAV…KPNK), 809–838 (SGNT…SINA), and 842–871 (KGNT…SVQV). A sufficient for interaction with VPS29 region spans residues 692–746 (TEEDLEDAEDTVSAADPEFCHPLCQCPKCAPAQKRLAKVPASGLGVNVTSQDGSS). Phosphoserine occurs at positions 962 and 970. Residues 987 to 1050 (PAQSGSHAAE…TPQEVSASRS (64 aa)) form a disordered region. Residues 994 to 1004 (AAEKGNSDWPE) are compositionally biased toward basic and acidic residues. Thr-1023 is modified (phosphothreonine). Over residues 1040–1050 (STPQEVSASRS) the composition is skewed to polar residues.

In terms of assembly, interacts with RAB21 (GDP-bound form), VPS29, RAB32 (GTP-bound form), RAB38 (GTP-bound form), VAMP7, KIF5A, KIF5C, GOLGA4. Interacts with low affinity with RAB5. ANKRD27:RAB32 heterodimers can homodimerize to form tetramers. Can interact with RAB38 or RAB32, VPS29 and VAMP7 simultaneously. A decreased interaction with RAB32 seen in the presence of SGSM2.

Its subcellular location is the early endosome. It is found in the late endosome. The protein resides in the cytoplasmic vesicle membrane. The protein localises to the lysosome. It localises to the cell membrane. Its subcellular location is the melanosome. May be a guanine exchange factor (GEF) for Rab21, Rab32 and Rab38 and regulate endosome dynamics. May regulate the participation of VAMP7 in membrane fusion events; in vitro inhibits VAMP7-mediated SNARE complex formation by trapping VAMP7 in a closed, fusogenically inactive conformation. Involved in peripheral melanosomal distribution of TYRP1 in melanocytes; the function, which probably is implicating vesicle-trafficking, includes cooperation with Rab32, Rab38 and VAMP7. Involved in the regulation of neurite growth; the function seems to require its GEF activity, probably towards Rab21, and VAMP7 but not Rab32/38. Proposed to be involved in Golgi sorting of VAMP7 and transport of VAMP7 vesicles to the cell surface; the function seems to implicate kinesin heavy chain isoform 5 proteins, GOLGA4, RAB21 and MACF1. Required for the colocalization of VAMP7 and Rab21, probably on TGN sites. Involved in GLUT1 endosome-to-plasma membrane trafficking; the function is dependent of association with VPS29. Regulates the proper trafficking of melanogenic enzymes TYR, TYRP1 and DCT/TYRP2 to melanosomes in melanocytes. The chain is Ankyrin repeat domain-containing protein 27 (ANKRD27) from Homo sapiens (Human).